The following is a 77-amino-acid chain: MSNIEERVKKIIVEQLGVDEAEVKNEASFVDDLGADSLDTVELVMALEEEFDTEIPDEEAEKITTVQAAIDYVNSAQ.

A Carrier domain is found at 2–77 (SNIEERVKKI…AAIDYVNSAQ (76 aa)). Serine 37 is subject to O-(pantetheine 4'-phosphoryl)serine.

This sequence belongs to the acyl carrier protein (ACP) family. 4'-phosphopantetheine is transferred from CoA to a specific serine of apo-ACP by AcpS. This modification is essential for activity because fatty acids are bound in thioester linkage to the sulfhydryl of the prosthetic group.

It is found in the cytoplasm. Its pathway is lipid metabolism; fatty acid biosynthesis. Its function is as follows. Carrier of the growing fatty acid chain in fatty acid biosynthesis. The chain is Acyl carrier protein from Vibrio campbellii (strain ATCC BAA-1116).